Here is a 619-residue protein sequence, read N- to C-terminus: Sodium-dependent dopamine transporter (619 aa).

The Cytoplasmic segment spans residues 1-56; sequence MSKSKCSVGPMSSVVAPAKESNAVGPREVELILVKEQNGVQLTNSTLINPPQTPVE. A discontinuously helical transmembrane segment spans residues 57–95; that stretch reads AQERETWSKKIDFLLSVIGFAVDLANVWRFPYLCYKNGG. Na(+) is bound by residues Gly-75, Ala-77, Val-78, Asp-79, and Asn-82. Residue Asp-79 participates in dopamine binding. A run of 2 helical transmembrane segments spans residues 96–127 and 128–171; these read GAFL…NREG and AAGV…FSSF. Residues Ser-149 and Gly-153 each coordinate dopamine. The Extracellular portion of the chain corresponds to 172 to 235; the sequence is TMDLPWIHCN…SRGIDDLGPP (64 aa). Residues Cys-180 and Cys-189 are joined by a disulfide bond. Residues Asn-181, Asn-188, Asn-196, and Asn-204 are each glycosylated (N-linked (GlcNAc...) asparagine). The next 2 helical transmembrane spans lie at 236–255 and 256–286; these read RWQL…FSLW and KGVK…GVTL. At 287 to 305 the chain is on the extracellular side; sequence PGAMDGIRAYLSVDFYRLC. A discontinuously helical membrane pass occupies residues 306–334; it reads EASVWIDAATQVCFSLGVGFGVLIAFSSY. A chloride-binding site is contributed by Gln-316. Phe-319 is a dopamine binding site. Na(+) is bound by residues Ser-320 and Asn-352. Ser-320 contacts chloride. Residues 335–375 traverse the membrane as a helical segment; sequence NKFTNNCYRDAIITTSINSLTSFSSGFVVFSFLGYMAQKHN. Chloride is bound at residue Ser-356. Residues 376–399 are Extracellular-facing; the sequence is VPIRDVATDGPGLIFIIYPEAIAT. 3 consecutive transmembrane segments (helical) span residues 400–441, 442–465, and 466–498; these read LPLS…QLLH, RHRE…CVTN, and GGIY…AWFY. Positions 417, 420, and 421 each coordinate Na(+). Dopamine contacts are provided by Ser-421 and Ala-422. Residues 499–515 lie on the Cytoplasmic side of the membrane; it reads GVQQFSDDIKQMTGQRP. The chain crosses the membrane as a helical span at residues 516 to 541; the sequence is NLYWRLCWKLVSPCFLLYVVVVSIVT. Residues 542–552 lie on the Extracellular side of the membrane; sequence FRPPHYGAYIF. The chain crosses the membrane as a helical span at residues 553-582; the sequence is PDWANALGWIIATSSMAMVPIYATYKFCSL. The segment at 560 to 589 is interaction with TGFB1I1; it reads GWIIATSSMAMVPIYATYKFCSLPGSFREK. The Cytoplasmic segment spans residues 583–619; the sequence is PGSFREKLAYAITPEKDHQLVDRGEVRQFTLRHWLLL.

Belongs to the sodium:neurotransmitter symporter (SNF) (TC 2.A.22) family. SLC6A3 subfamily. In terms of assembly, monomer. Homooligomer; disulfide-linked. Interacts with PRKCABP and TGFB1I1. Interacts (via N-terminus) with SYNGR3 (via N-terminus). Interacts with SLC18A2. Interacts with TOR1A (ATP-bound); TOR1A regulates SLC6A3 subcellular location. Interacts with alpha-synuclein/SNCA. Interacts with SEPTIN4. As to expression, brain. Expressed in the substantia nigra and ventral tegmental area, regions that contain dopaminergic cell bodies.

It is found in the cell membrane. It localises to the cell projection. Its subcellular location is the neuron projection. The protein localises to the axon. It catalyses the reaction dopamine(out) + chloride(out) + Na(+)(out) = dopamine(in) + chloride(in) + Na(+)(in). The catalysed reaction is (R)-noradrenaline(out) + chloride(out) + Na(+)(out) = (R)-noradrenaline(in) + chloride(in) + Na(+)(in). It carries out the reaction dopamine(out) + chloride(out) + 2 Na(+)(out) = dopamine(in) + chloride(in) + 2 Na(+)(in). With respect to regulation, inhibited by mazindol, cocaine, desipramine, GBR 12783 dihydrochloride, GBR 12909 dihydrochloride and nomifensine. Inhibited by zinc ions. Its function is as follows. Mediates sodium- and chloride-dependent transport of dopamine. Also mediates sodium- and chloride-dependent transport of norepinephrine (also known as noradrenaline). Regulator of light-dependent retinal hyaloid vessel regression, downstream of OPN5 signaling. This is Sodium-dependent dopamine transporter (Slc6a3) from Rattus norvegicus (Rat).